Here is a 208-residue protein sequence, read N- to C-terminus: Uracil phosphoribosyltransferase (208 aa).

5-phospho-alpha-D-ribose 1-diphosphate contacts are provided by residues Arg-78, Arg-103, and 130–138 (DPMLATGGS). Residues Ile-193 and 198–200 (GDA) each bind uracil. Asp-199 provides a ligand contact to 5-phospho-alpha-D-ribose 1-diphosphate.

This sequence belongs to the UPRTase family. The cofactor is Mg(2+).

It catalyses the reaction UMP + diphosphate = 5-phospho-alpha-D-ribose 1-diphosphate + uracil. Its pathway is pyrimidine metabolism; UMP biosynthesis via salvage pathway; UMP from uracil: step 1/1. With respect to regulation, allosterically activated by GTP. Functionally, catalyzes the conversion of uracil and 5-phospho-alpha-D-ribose 1-diphosphate (PRPP) to UMP and diphosphate. The sequence is that of Uracil phosphoribosyltransferase from Proteus mirabilis (strain HI4320).